Reading from the N-terminus, the 30-residue chain is Cyclotide mden-G (30 aa).

Residues 1–30 (GIPCAESCVYIPCITAALGCSCKNKVCYRN) constitute a cross-link (cyclopeptide (Gly-Asn)). Intrachain disulfides connect cysteine 4/cysteine 20, cysteine 8/cysteine 22, and cysteine 13/cysteine 27.

Belongs to the cyclotide family. Bracelet subfamily. This is a cyclic peptide.

Probably participates in a plant defense mechanism. In Melicytus dentatus (Tree violet), this protein is Cyclotide mden-G.